The primary structure comprises 590 residues: Aspartate--tRNA(Asp/Asn) ligase (590 aa).

L-aspartate is bound at residue Glu176. The interval 200-203 (QLFK) is aspartate. L-aspartate-binding residues include Arg222 and His451. Residue 222–224 (RDE) coordinates ATP. Glu485 lines the ATP pocket. Residue Arg492 coordinates L-aspartate. Residue 537–540 (GIDR) coordinates ATP.

Belongs to the class-II aminoacyl-tRNA synthetase family. Type 1 subfamily. As to quaternary structure, homodimer.

The protein localises to the cytoplasm. The enzyme catalyses tRNA(Asx) + L-aspartate + ATP = L-aspartyl-tRNA(Asx) + AMP + diphosphate. Functionally, aspartyl-tRNA synthetase with relaxed tRNA specificity since it is able to aspartylate not only its cognate tRNA(Asp) but also tRNA(Asn). Reaction proceeds in two steps: L-aspartate is first activated by ATP to form Asp-AMP and then transferred to the acceptor end of tRNA(Asp/Asn). The polypeptide is Aspartate--tRNA(Asp/Asn) ligase (Ehrlichia ruminantium (strain Welgevonden)).